The chain runs to 359 residues: Aflatoxin B1 aldehyde reductase member 2 (359 aa).

The transit peptide at 1–38 (MLSAASRVVSRAAVHCALRSPPPEARALAMSRPPPPRV) directs the protein to the mitochondrion. Residue Ser40 is modified to Phosphoserine. NADP(+) is bound at residue Asp72. Residue Tyr77 is the Proton donor of the active site. The residue at position 128 (Lys128) is an N6-acetyllysine. His141 serves as a coordination point for substrate. Residues 171–172 (SN), Gln197, 226–236 (NPLAGGLLTGK), and Arg250 contribute to the NADP(+) site. Lys236 bears the N6-succinyllysine mark. Position 255 is a phosphoserine (Ser255). Residues Tyr260 and Arg263 each coordinate substrate. Residue 318–326 (SSLEQLEQN) participates in NADP(+) binding. Residue Arg359 participates in substrate binding.

The protein belongs to the aldo/keto reductase family. Aldo/keto reductase 2 subfamily. As to quaternary structure, homodimer. As to expression, detected in brain, liver, small intestine and testis, and at lower levels in heart, prostate, skeletal muscle and spleen. Detected in kidney proximal and distal tubules, endothelial cells lining the Bowman's capsules and some cysts. Detected at low levels in lung and pancreas (at protein level). Widely expressed.

It is found in the mitochondrion. It localises to the golgi apparatus. Its subcellular location is the cytoplasm. The enzyme catalyses 4-hydroxybutanoate + NADP(+) = succinate semialdehyde + NADPH + H(+). Functionally, catalyzes the NADPH-dependent reduction of succinic semialdehyde to gamma-hydroxybutyrate. May have an important role in producing the neuromodulator gamma-hydroxybutyrate (GHB). Has broad substrate specificity. Has NADPH-dependent aldehyde reductase activity towards 2-carboxybenzaldehyde, 2-nitrobenzaldehyde and pyridine-2-aldehyde (in vitro). Can reduce 1,2-naphthoquinone and 9,10-phenanthrenequinone (in vitro). Can reduce the dialdehyde protein-binding form of aflatoxin B1 (AFB1) to the non-binding AFB1 dialcohol. May be involved in protection of liver against the toxic and carcinogenic effects of AFB1, a potent hepatocarcinogen. The polypeptide is Aflatoxin B1 aldehyde reductase member 2 (AKR7A2) (Homo sapiens (Human)).